Consider the following 344-residue polypeptide: Hydrophobic dipeptide epimerase (344 aa).

Substrate is bound by residues Thr-126 and 151–153 (KIK). 3 residues coordinate Mg(2+): Asp-184, Glu-210, and Asp-235. Residues Lys-257 and 307 to 309 (DLD) each bind substrate.

Belongs to the mandelate racemase/muconate lactonizing enzyme family. It depends on Mg(2+) as a cofactor.

Functionally, dipeptide epimerase with a preference for hydrophobic substrates. Catalyzes the epimerization of L-Ala-L-Thr, L-Ala-L-Met, L-Ala-L-His, L-Ala-L-Phe, L-Ala-L-Tyr, L-Ala-L-Trp, L-Ile-L-Ala, L-Ile-L-Ser, L-Ile-L-Met, L-Ile-L-His, L-Ile-L-Phe, L-Ile-L-Tyr, L-Ile-L-Trp, L-Phe-L-Met, L-Phe-L-His, L-Phe-L-Phe, L-Phe-L-Tyr, L-Phe-L-Trp, L-Phe-L-Ser, L-Phe-L-Thr and L-Phe-L-Lys (in vitro). The chain is Hydrophobic dipeptide epimerase from Roseobacter litoralis (strain ATCC 49566 / DSM 6996 / JCM 21268 / NBRC 15278 / OCh 149).